Reading from the N-terminus, the 441-residue chain is 23S rRNA (uracil(1939)-C(5))-methyltransferase RlmD (441 aa).

Residues Lys-10–Lys-68 form the TRAM domain. Positions 81, 87, 90, and 169 each coordinate [4Fe-4S] cluster. 6 residues coordinate S-adenosyl-L-methionine: Gln-274, Phe-303, Asn-308, Glu-324, Asp-351, and Asp-372. Cys-398 acts as the Nucleophile in catalysis.

The protein belongs to the class I-like SAM-binding methyltransferase superfamily. RNA M5U methyltransferase family. RlmD subfamily.

It carries out the reaction uridine(1939) in 23S rRNA + S-adenosyl-L-methionine = 5-methyluridine(1939) in 23S rRNA + S-adenosyl-L-homocysteine + H(+). Its function is as follows. Catalyzes the formation of 5-methyl-uridine at position 1939 (m5U1939) in 23S rRNA. The protein is 23S rRNA (uracil(1939)-C(5))-methyltransferase RlmD of Pseudoalteromonas translucida (strain TAC 125).